The sequence spans 500 residues: MNHFPWLTIIVVLPIFAGSLIFFLPHRGNRVIFWYTICISILELLLTTYAFCYHFQSDDPLIQLVEDYKWIDFFDFHWRLGIDGLSIGPILLTGFITTLATLAARPVTRDARLFHFLMLVMYSGQIGLFSCRDLLLFFLMWEFELIPVYLLLSMWGGKKRLYSATKFILYTAGGSVFLLMGALGIGLYGSNEPTFNLEILANQSYPVALERIFYIGFFIAFAVKLPIIPLHTWLPDTHGEAHYSTCMLLAGILLKMGAYGLVRINMELLSHAHSLFSPWLMIVGAMQIIYAASTSLGQRNLKKRIAYSSVSHMGFLIIGIGSITDIGLDGALLQIISHGFIGAALFFLAGTTYDRIRLVYLDEMGGIAIPMPKIFTMFSIFSMASLALPGMSGFVTEFIVFFGLITSPKYLLMAKILIPFVMAIGIILTPIYSLSMSRQMFYGYKIFNAPNSYFLDSGPRELFLSISIFLPILGIGLYPDFVLSLSVDKVEVILSNSFDR.

Transmembrane regions (helical) follow at residues 4-24 (FPWLTIIVVLPIFAGSLIFFL), 31-51 (VIFWYTICISILELLLTTYAF), 84-104 (GLSIGPILLTGFITTLATLAA), 111-131 (ARLFHFLMLVMYSGQIGLFSC), 134-154 (LLLFFLMWEFELIPVYLLLSM), 167-187 (FILYTAGGSVFLLMGALGIGL), 212-232 (IFYIGFFIAFAVKLPIIPLHT), 242-262 (HYSTCMLLAGILLKMGAYGLV), 272-292 (AHSLFSPWLMIVGAMQIIYAA), 308-328 (SSVSHMGFLIIGIGSITDIGL), 330-350 (GALLQIISHGFIGAALFFLAG), 386-406 (LALPGMSGFVTEFIVFFGLIT), 411-431 (LLMAKILIPFVMAIGIILTPI), and 462-482 (LFLSISIFLPILGIGLYPDFV).

Belongs to the complex I subunit 4 family.

The protein localises to the plastid. Its subcellular location is the chloroplast thylakoid membrane. The catalysed reaction is a plastoquinone + NADH + (n+1) H(+)(in) = a plastoquinol + NAD(+) + n H(+)(out). It carries out the reaction a plastoquinone + NADPH + (n+1) H(+)(in) = a plastoquinol + NADP(+) + n H(+)(out). The polypeptide is NAD(P)H-quinone oxidoreductase chain 4, chloroplastic (Jasminum nudiflorum (Winter jasmine)).